Consider the following 172-residue polypeptide: RNA silencing suppressor p19 (172 aa).

Positions 153–172 are disordered; the sequence is EGNVSRGSPEGTEAFKEESE.

The protein belongs to the tombusvirus protein p19 family. As to quaternary structure, homodimer.

Viral suppressor of RNA silencing which binds specifically to silencing RNAs (siRNAs). Acts as a molecular caliper to specifically select siRNAs based on the length of the duplex region of the RNA. The polypeptide is RNA silencing suppressor p19 (Pear latent virus (PeLV)).